A 447-amino-acid chain; its full sequence is Gamma-glutamyl phosphate reductase (447 aa).

This sequence belongs to the gamma-glutamyl phosphate reductase family.

It localises to the cytoplasm. The catalysed reaction is L-glutamate 5-semialdehyde + phosphate + NADP(+) = L-glutamyl 5-phosphate + NADPH + H(+). It participates in amino-acid biosynthesis; L-proline biosynthesis; L-glutamate 5-semialdehyde from L-glutamate: step 2/2. Functionally, catalyzes the NADPH-dependent reduction of L-glutamate 5-phosphate into L-glutamate 5-semialdehyde and phosphate. The product spontaneously undergoes cyclization to form 1-pyrroline-5-carboxylate. The sequence is that of Gamma-glutamyl phosphate reductase from Methanosarcina barkeri (strain Fusaro / DSM 804).